The following is a 190-amino-acid chain: Inner membrane-spanning protein YciB (190 aa).

6 helical membrane passes run 3–23, 24–44, 49–69, 76–96, 121–141, and 149–169; these read FLFD…AGIY, VATT…WFKH, AMQW…LIFH, WKPT…VVVV, LVWA…AYNF, and FKLF…SVWL.

Belongs to the YciB family.

Its subcellular location is the cell inner membrane. In terms of biological role, plays a role in cell envelope biogenesis, maintenance of cell envelope integrity and membrane homeostasis. The sequence is that of Inner membrane-spanning protein YciB from Ralstonia pickettii (strain 12J).